A 286-amino-acid polypeptide reads, in one-letter code: Putative 2-aminoethylphosphonate transport system permease protein PhnU (286 aa).

A run of 6 helical transmembrane segments spans residues 19-39 (WLLLPLLVLATLFFWPLSLIV), 76-96 (FFATAGCLLLGSVMSLILVFI), 111-131 (FIALPTFLITLAFTFIYGSAG), 150-170 (FLYSMQGVILAEITVFTPLVM), 202-222 (VIFPAALPALMAGGSLCLLLT), and 254-274 (YTVACMIALINIVLSLGLFSL). Positions 68–275 (LLNTLQIAFF…VLSLGLFSLY (208 aa)) constitute an ABC transmembrane type-1 domain.

Belongs to the binding-protein-dependent transport system permease family.

It is found in the cell inner membrane. Its function is as follows. Probably part of the PhnSTUV complex (TC 3.A.1.11.5) involved in 2-aminoethylphosphonate import. Probably responsible for the translocation of the substrate across the membrane. This Salmonella typhimurium (strain LT2 / SGSC1412 / ATCC 700720) protein is Putative 2-aminoethylphosphonate transport system permease protein PhnU (phnU).